The sequence spans 382 residues: Sphingoid long-chain base transporter RSB1 (382 aa).

At 1-34 the chain is on the extracellular side; sequence MSNATNNTLGSLLPQLEAAANSNSLYGGMVPNLR. Residues Asn3 and Asn6 are each glycosylated (N-linked (GlcNAc...) asparagine). Residues 35–55 traverse the membrane as a helical segment; the sequence is FNITMIVIWGILLTIHVVQLL. Residues 56–57 are Cytoplasmic-facing; that stretch reads MR. Residues 58–78 form a helical membrane-spanning segment; the sequence is QYWFSIAFICTGILEVLGYIG. Topologically, residues 79–90 are extracellular; the sequence is RTWSHSNVADMD. The helical transmembrane segment at 91–111 threads the bilayer; sequence AFLLNMICLTIAPVFTMGGIY. Residues 112-135 lie on the Cytoplasmic side of the membrane; the sequence is YQLAKLIEVYGHRFSLLPSPMAYS. A helical transmembrane segment spans residues 136 to 156; it reads FIFICSDIVSLVVQAVGGGLC. Over 157-171 the chain is Extracellular; that stretch reads GVAVTDGTSTTTGNH. The chain crosses the membrane as a helical span at residues 172–192; it reads VFIAGLAIQVASMAIFLMLWF. Residues 193-241 lie on the Cytoplasmic side of the membrane; the sequence is HFLFRIYISVRWEHINSRPISLSLLKISQTEVDYLYREKFHFLRLEPKR. The helical transmembrane segment at 242–262 threads the bilayer; it reads WVFHYFNLAMTVAVLTIFTRC. Topologically, residues 263 to 281 are extracellular; that stretch reads CYRLAELVVGWDGYLITHE. The chain crosses the membrane as a helical span at residues 282-302; the sequence is WYFIILDALMMAIATVTLTIF. Residues 303–382 are Cytoplasmic-facing; the sequence is HPGFAFKGRS…LFSSKKKAKL (80 aa).

It belongs to the lipid-translocating exporter (LTE) (TC 9.A.26.1) family.

Its subcellular location is the cell membrane. Its function is as follows. Catalyzes the ATP-dependent translocation of sphingoid long-chain bases (LCBs) from the cytoplasmic site toward the extracytoplasmic side of the membrane (flip-flop). Involved in the establishment of the functional lipid asymmetry of the plasma membrane. Regulates intracellular levels of LCBs, sphingolipid precursors that are growth inhibitory at increased levels. The protein is Sphingoid long-chain base transporter RSB1 (RSB1) of Saccharomyces cerevisiae (strain Lalvin EC1118 / Prise de mousse) (Baker's yeast).